We begin with the raw amino-acid sequence, 150 residues long: Large ribosomal subunit protein uL11 (150 aa).

It belongs to the universal ribosomal protein uL11 family. Part of the ribosomal stalk of the 50S ribosomal subunit. Interacts with L10 and the large rRNA to form the base of the stalk. L10 forms an elongated spine to which L12 dimers bind in a sequential fashion forming a multimeric L10(L12)X complex. Post-translationally, one or more lysine residues are methylated.

Forms part of the ribosomal stalk which helps the ribosome interact with GTP-bound translation factors. The polypeptide is Large ribosomal subunit protein uL11 (Ureaplasma urealyticum serovar 10 (strain ATCC 33699 / Western)).